The following is a 436-amino-acid chain: uncharacterized protein (436 aa).

The first 18 residues, 1–18 (MMKRFVALSMAIFSLSFA), serve as a signal peptide directing secretion.

This is an uncharacterized protein from Aquifex aeolicus (strain VF5).